A 515-amino-acid polypeptide reads, in one-letter code: Maturase K (515 aa).

This sequence belongs to the intron maturase 2 family. MatK subfamily.

The protein localises to the plastid. Its subcellular location is the chloroplast. Functionally, usually encoded in the trnK tRNA gene intron. Probably assists in splicing its own and other chloroplast group II introns. This chain is Maturase K, found in Trillium luteum (Yellow wakerobin).